The chain runs to 747 residues: uncharacterized protein (747 aa).

The chain crosses the membrane as a helical span at residues 7 to 27; sequence FFLKVISVIAPIVIIPTILAN.

It is found in the membrane. This is an uncharacterized protein from Ureaplasma parvum serovar 3 (strain ATCC 700970).